A 153-amino-acid polypeptide reads, in one-letter code: Small ribosomal subunit protein bS16 (153 aa).

The disordered stretch occupies residues 114–153; that stretch reads ENEPVGEAITPKKKKAKAEDAEAAADAPAEAAAESEAADK. A compositionally biased stretch (low complexity) spans 137 to 153; sequence AADAPAEAAAESEAADK.

This sequence belongs to the bacterial ribosomal protein bS16 family.

The protein is Small ribosomal subunit protein bS16 of Rhodococcus jostii (strain RHA1).